Here is a 495-residue protein sequence, read N- to C-terminus: L-arabinose isomerase (495 aa).

Residues glutamate 305, glutamate 332, histidine 349, and histidine 448 each contribute to the Mn(2+) site.

Belongs to the arabinose isomerase family. Mn(2+) is required as a cofactor.

It carries out the reaction beta-L-arabinopyranose = L-ribulose. Its pathway is carbohydrate degradation; L-arabinose degradation via L-ribulose; D-xylulose 5-phosphate from L-arabinose (bacterial route): step 1/3. Catalyzes the conversion of L-arabinose to L-ribulose. In Mannheimia succiniciproducens (strain KCTC 0769BP / MBEL55E), this protein is L-arabinose isomerase.